Here is a 321-residue protein sequence, read N- to C-terminus: Lipoyl synthase (321 aa).

Positions 68, 73, 79, 94, 98, 101, and 308 each coordinate [4Fe-4S] cluster. The region spanning 80–297 (FNHGTATFMI…KDYAEEIGFT (218 aa)) is the Radical SAM core domain.

The protein belongs to the radical SAM superfamily. Lipoyl synthase family. [4Fe-4S] cluster is required as a cofactor.

It is found in the cytoplasm. The catalysed reaction is [[Fe-S] cluster scaffold protein carrying a second [4Fe-4S](2+) cluster] + N(6)-octanoyl-L-lysyl-[protein] + 2 oxidized [2Fe-2S]-[ferredoxin] + 2 S-adenosyl-L-methionine + 4 H(+) = [[Fe-S] cluster scaffold protein] + N(6)-[(R)-dihydrolipoyl]-L-lysyl-[protein] + 4 Fe(3+) + 2 hydrogen sulfide + 2 5'-deoxyadenosine + 2 L-methionine + 2 reduced [2Fe-2S]-[ferredoxin]. The protein operates within protein modification; protein lipoylation via endogenous pathway; protein N(6)-(lipoyl)lysine from octanoyl-[acyl-carrier-protein]: step 2/2. Functionally, catalyzes the radical-mediated insertion of two sulfur atoms into the C-6 and C-8 positions of the octanoyl moiety bound to the lipoyl domains of lipoate-dependent enzymes, thereby converting the octanoylated domains into lipoylated derivatives. This is Lipoyl synthase from Shewanella loihica (strain ATCC BAA-1088 / PV-4).